Consider the following 337-residue polypeptide: Biotin synthase (337 aa).

In terms of domain architecture, Radical SAM core spans 58 to 283 (EDVEVEGIVS…RTVLRYAGGR (226 aa)). Positions 73, 77, and 80 each coordinate [4Fe-4S] cluster. Residues Cys116, Cys149, Cys208, and Arg278 each coordinate [2Fe-2S] cluster.

It belongs to the radical SAM superfamily. Biotin synthase family. In terms of assembly, homodimer. It depends on [4Fe-4S] cluster as a cofactor. [2Fe-2S] cluster is required as a cofactor.

It catalyses the reaction (4R,5S)-dethiobiotin + (sulfur carrier)-SH + 2 reduced [2Fe-2S]-[ferredoxin] + 2 S-adenosyl-L-methionine = (sulfur carrier)-H + biotin + 2 5'-deoxyadenosine + 2 L-methionine + 2 oxidized [2Fe-2S]-[ferredoxin]. It functions in the pathway cofactor biosynthesis; biotin biosynthesis; biotin from 7,8-diaminononanoate: step 2/2. Its function is as follows. Catalyzes the conversion of dethiobiotin (DTB) to biotin by the insertion of a sulfur atom into dethiobiotin via a radical-based mechanism. This Pseudarthrobacter chlorophenolicus (strain ATCC 700700 / DSM 12829 / CIP 107037 / JCM 12360 / KCTC 9906 / NCIMB 13794 / A6) (Arthrobacter chlorophenolicus) protein is Biotin synthase.